The primary structure comprises 786 residues: Signal transducer and activator of transcription 5B (786 aa).

Tyr90 bears the Phosphotyrosine mark. Residue Ser128 is modified to Phosphoserine. Residues 589–686 (WNDGAILGFV…EVYSKYYTPV (98 aa)) enclose the SH2 domain. Phosphotyrosine occurs at positions 682 and 699.

It belongs to the transcription factor STAT family. In terms of assembly, upon activation, forms a homodimer or a heterodimer with a related family member. Binds NR3C1. Interacts with NCOA1. Interacts with SOCS7. Interacts (via SH2 domain) with INSR. Interacts with CPEB3; this inhibits STAT5B-mediated transcriptional activation. Tyrosine phosphorylated in response to signaling via activated KIT, resulting in translocation to the nucleus. Tyrosine phosphorylated in response to signaling via activated FLT3; wild-type FLT3 results in much weaker phosphorylation than constitutively activated mutant FLT3. Alternatively, can be phosphorylated by JAK2. Phosphorylation at Tyr-699 by PTK6 or HCK leads to an increase of its transcriptional activity. In terms of tissue distribution, in the virgin, found in most tissues. Particularly abundant in muscle tissue of virgin and lactating females, and of males.

Its subcellular location is the cytoplasm. The protein localises to the nucleus. Carries out a dual function: signal transduction and activation of transcription. Mediates cellular responses to the cytokine KITLG/SCF and other growth factors. Binds to the GAS element and activates PRL-induced transcription. Positively regulates hematopoietic/erythroid differentiation. The polypeptide is Signal transducer and activator of transcription 5B (Stat5b) (Mus musculus (Mouse)).